The primary structure comprises 215 residues: Cytochrome b6 (215 aa).

A helical membrane pass occupies residues 32–52; it reads IFYCLGGITLTCFLVQIATGF. Cys35 lines the heme c pocket. Residues His86 and His100 each coordinate heme b. The next 3 helical transmembrane spans lie at 90–110, 116–136, and 186–206; these read ASMM…TGGF, LTWV…VTGY, and LHTF…FLMI. The heme b site is built by His187 and His202.

It belongs to the cytochrome b family. PetB subfamily. The 4 large subunits of the cytochrome b6-f complex are cytochrome b6, subunit IV (17 kDa polypeptide, PetD), cytochrome f and the Rieske protein, while the 4 small subunits are PetG, PetL, PetM and PetN. The complex functions as a dimer. It depends on heme b as a cofactor. Requires heme c as cofactor.

Its subcellular location is the plastid. It localises to the chloroplast thylakoid membrane. In terms of biological role, component of the cytochrome b6-f complex, which mediates electron transfer between photosystem II (PSII) and photosystem I (PSI), cyclic electron flow around PSI, and state transitions. The polypeptide is Cytochrome b6 (Adiantum capillus-veneris (Maidenhair fern)).